Reading from the N-terminus, the 118-residue chain is Large ribosomal subunit protein uL18 (118 aa).

The protein belongs to the universal ribosomal protein uL18 family. As to quaternary structure, part of the 50S ribosomal subunit; part of the 5S rRNA/L5/L18/L25 subcomplex. Contacts the 5S and 23S rRNAs.

This is one of the proteins that bind and probably mediate the attachment of the 5S RNA into the large ribosomal subunit, where it forms part of the central protuberance. The sequence is that of Large ribosomal subunit protein uL18 from Acidobacterium capsulatum (strain ATCC 51196 / DSM 11244 / BCRC 80197 / JCM 7670 / NBRC 15755 / NCIMB 13165 / 161).